We begin with the raw amino-acid sequence, 120 residues long: Chaperonin GroEL (120 aa).

Asp23 to Thr27 lines the ATP pocket.

This sequence belongs to the chaperonin (HSP60) family. In terms of assembly, forms a cylinder of 14 subunits composed of two heptameric rings stacked back-to-back. Interacts with the co-chaperonin GroES.

It localises to the cytoplasm. The enzyme catalyses ATP + H2O + a folded polypeptide = ADP + phosphate + an unfolded polypeptide.. Functionally, together with its co-chaperonin GroES, plays an essential role in assisting protein folding. The GroEL-GroES system forms a nano-cage that allows encapsulation of the non-native substrate proteins and provides a physical environment optimized to promote and accelerate protein folding. The protein is Chaperonin GroEL of Mycolicibacterium chitae (Mycobacterium chitae).